A 182-amino-acid polypeptide reads, in one-letter code: ADP-ribosylation factor 3 (182 aa).

Residue Gly-2 is the site of N-myristoyl glycine attachment. GTP is bound by residues 24–31, 67–71, and 126–129; these read GLDNAGKT, DLGGQ, and NKQD.

Belongs to the small GTPase superfamily. Arf family. Interacts with GRIP; but preferentially when bound to GTP.

The protein localises to the golgi apparatus. In terms of biological role, GTP-binding protein involved in protein trafficking; may modulate vesicle budding and uncoating within the Golgi apparatus. The chain is ADP-ribosylation factor 3 (ARF3) from Arabidopsis thaliana (Mouse-ear cress).